Reading from the N-terminus, the 185-residue chain is Elongation factor P (185 aa).

This sequence belongs to the elongation factor P family.

It localises to the cytoplasm. The protein operates within protein biosynthesis; polypeptide chain elongation. Involved in peptide bond synthesis. Stimulates efficient translation and peptide-bond synthesis on native or reconstituted 70S ribosomes in vitro. Probably functions indirectly by altering the affinity of the ribosome for aminoacyl-tRNA, thus increasing their reactivity as acceptors for peptidyl transferase. The protein is Elongation factor P of Burkholderia lata (strain ATCC 17760 / DSM 23089 / LMG 22485 / NCIMB 9086 / R18194 / 383).